Here is a 384-residue protein sequence, read N- to C-terminus: N-acetyldiaminopimelate deacetylase (384 aa).

D75 is an active-site residue. The Proton acceptor role is filled by E134.

This sequence belongs to the peptidase M20A family. N-acetyldiaminopimelate deacetylase subfamily.

It carries out the reaction N-acetyl-(2S,6S)-2,6-diaminopimelate + H2O = (2S,6S)-2,6-diaminopimelate + acetate. It participates in amino-acid biosynthesis; L-lysine biosynthesis via DAP pathway; LL-2,6-diaminopimelate from (S)-tetrahydrodipicolinate (acetylase route): step 3/3. Catalyzes the conversion of N-acetyl-diaminopimelate to diaminopimelate and acetate. This chain is N-acetyldiaminopimelate deacetylase, found in Lactobacillus helveticus (strain DPC 4571).